We begin with the raw amino-acid sequence, 82 residues long: uncharacterized protein (82 aa).

Helical transmembrane passes span 1–21 (MSAS…SVST), 22–42 (VLLG…LAAF), and 62–82 (WRLL…LTLL).

It is found in the cell membrane. This is an uncharacterized protein from Stutzerimonas stutzeri (Pseudomonas stutzeri).